Reading from the N-terminus, the 314-residue chain is MATLVSPPNFCAKEDAEALRKSVKGWGTNEKAIISILGHRNAGQRKEIRAAYEQLYQEDLLKPLESELSGDFEKAVYRWTLDPADRDAVLANVAIKKSTDVYNVIIEISCIHSPEELLAVRRAYQLRYKHSVEEDLAAHTTGDIRKLLVALVTAYRYDGHEINAKLANSEADILHDAIKDKAFNHEEIIRILSTRSKTQLMATFNKYRDDQGISISKNLLEEGANDFQKALHTAIRCLNDPKKYFEKVLRNAIKRVGTDEDALTRVIVTRAERDLRDIKEVYYKKNSVPLEQAVAKDTSGDYKAFLLTLLGKED.

Annexin repeat units lie at residues 10-81 (FCAK…RWTL), 82-153 (DPAD…ALVT), 165-236 (KLAN…TAIR), and 240-311 (DPKK…TLLG). Ca(2+) contacts are provided by Gly25, Gly27, and Glu67. Positions 253, 255, 257, 297, and 298 each coordinate Ca(2+).

It belongs to the annexin (TC 1.A.31.1) family. Predominantly in developing fruit.

The chain is Annexin-like protein RJ4 from Fragaria ananassa (Strawberry).